The primary structure comprises 80 residues: Translational regulator CsrA (80 aa).

Belongs to the CsrA/RsmA family. As to quaternary structure, homodimer; the beta-strands of each monomer intercalate to form a hydrophobic core, while the alpha-helices form wings that extend away from the core.

The protein localises to the cytoplasm. Functionally, a translational regulator that binds mRNA to regulate translation initiation and/or mRNA stability. Usually binds in the 5'-UTR at or near the Shine-Dalgarno sequence preventing ribosome-binding, thus repressing translation. Its main target seems to be the major flagellin gene, while its function is anatagonized by FliW. This chain is Translational regulator CsrA, found in Desulforamulus reducens (strain ATCC BAA-1160 / DSM 100696 / MI-1) (Desulfotomaculum reducens).